Reading from the N-terminus, the 417-residue chain is NADH-quinone oxidoreductase subunit D (417 aa).

It belongs to the complex I 49 kDa subunit family. As to quaternary structure, NDH-1 is composed of 14 different subunits. Subunits NuoB, C, D, E, F, and G constitute the peripheral sector of the complex.

The protein resides in the cell inner membrane. It catalyses the reaction a quinone + NADH + 5 H(+)(in) = a quinol + NAD(+) + 4 H(+)(out). NDH-1 shuttles electrons from NADH, via FMN and iron-sulfur (Fe-S) centers, to quinones in the respiratory chain. The immediate electron acceptor for the enzyme in this species is believed to be ubiquinone. Couples the redox reaction to proton translocation (for every two electrons transferred, four hydrogen ions are translocated across the cytoplasmic membrane), and thus conserves the redox energy in a proton gradient. This Methylibium petroleiphilum (strain ATCC BAA-1232 / LMG 22953 / PM1) protein is NADH-quinone oxidoreductase subunit D.